The following is a 123-amino-acid chain: MIQEQTMLNVADNSGARRVMCIKVLGGSHRRYAGVGDIIKITIKEAIPRGKVKKGDVLKAVVVRTKKGVRRPDGSVVRFDGNACVLLNNNSEQPIGTRIFGPVTRELRSEKFMKIISLAPEVL.

Belongs to the universal ribosomal protein uL14 family. As to quaternary structure, part of the 50S ribosomal subunit. Forms a cluster with proteins L3 and L19. In the 70S ribosome, L14 and L19 interact and together make contacts with the 16S rRNA in bridges B5 and B8.

Functionally, binds to 23S rRNA. Forms part of two intersubunit bridges in the 70S ribosome. This chain is Large ribosomal subunit protein uL14, found in Cronobacter sakazakii (strain ATCC BAA-894) (Enterobacter sakazakii).